A 257-amino-acid chain; its full sequence is UPF0246 protein BF3795 (257 aa).

This sequence belongs to the UPF0246 family.

In Bacteroides fragilis (strain ATCC 25285 / DSM 2151 / CCUG 4856 / JCM 11019 / LMG 10263 / NCTC 9343 / Onslow / VPI 2553 / EN-2), this protein is UPF0246 protein BF3795.